The sequence spans 93 residues: Large ribosomal subunit protein uL23cz/uL23cy (93 aa).

It belongs to the universal ribosomal protein uL23 family. Part of the 50S ribosomal subunit.

It is found in the plastid. The protein resides in the chloroplast. Its function is as follows. Binds to 23S rRNA. The chain is Large ribosomal subunit protein uL23cz/uL23cy (rpl23-A) from Citrus sinensis (Sweet orange).